The sequence spans 97 residues: Large ribosomal subunit protein uL23 (97 aa).

The protein belongs to the universal ribosomal protein uL23 family. As to quaternary structure, part of the 50S ribosomal subunit. Contacts protein L29, and trigger factor when it is bound to the ribosome.

Its function is as follows. One of the early assembly proteins it binds 23S rRNA. One of the proteins that surrounds the polypeptide exit tunnel on the outside of the ribosome. Forms the main docking site for trigger factor binding to the ribosome. The protein is Large ribosomal subunit protein uL23 of Clostridium botulinum (strain ATCC 19397 / Type A).